A 231-amino-acid chain; its full sequence is uncharacterized protein (231 aa).

NADP(+) is bound at residue 10–34 (VVTGAGSGIGEAIATLLHEEGAKVV). Ser140 serves as a coordination point for substrate. Tyr153 functions as the Proton acceptor in the catalytic mechanism.

This sequence belongs to the short-chain dehydrogenases/reductases (SDR) family.

This is an uncharacterized protein from Staphylococcus aureus (strain COL).